We begin with the raw amino-acid sequence, 452 residues long: SAGA complex/transcription factor TFIID complex subunit Taf6 (452 aa).

In terms of domain architecture, Histone-fold spans 4 to 68 (TVWNIESIKD…TSADISSALR (65 aa)).

The protein belongs to the TAF6 family. Component of the 1.8 MDa SAGA (Spt-Ada-Gcn5 acetyltransferase) complex, which is composed of 19 subunits tra1, spt7, taf5, ngg1/ada3, sgf73, spt20, spt8, taf12, taf6, hfi1/ada1, ubp8, gcn5, ada2, spt3, sgf29, taf10, taf9, sgf11 and sus1. The SAGA complex is composed of 4 modules, namely the HAT (histone acetyltransferase) module (gcn5, ada2, ngg1/ada3 and sgf29), the DUB (deubiquitinating) module (ubp8, sgf11, sgf73 and sus1), the core or TAF (TBP-associated factor) module (taf5, taf6, taf9, taf10 and taf12), and the Tra1 or SPT (Suppressor of Ty) module (tra1, hfi1/ada1, spt3, spt7, spt8 and spt20). The Tra1/SPT module binds activators, the core module recruits TBP (TATA-binding protein), the HAT module contains the histone H3 acetyltransferase gcn5, and the DUB module comprises the histone H2B deubiquitinase ubp8. Interacts with gcn5, taf5 and taf73. Component of the 1.2 MDa TFIID complex, which is composed of TATA-binding protein (TBP) and the 14 TBP-associated factors (TAFs). It comprises 1 copy of each taf1, taf2, taf3, taf7, taf8, taf11, taf13, 2 copies of each taf4, taf5, taf6, taf9, taf10, taf12, and 3 copies of taf14. In TFIID, taf6 heterodimerizes with taf9, forming ultimately an octamer consisting of a taf6-taf9 heterotetramer core flanked by taf4-taf12 dimers on either side, similar to the histone H2A-H2B-H3-H4 octamer.

Its subcellular location is the nucleus. In terms of biological role, functions as a component of both the DNA-binding general transcription initiation factor complex TFIID and the transcription coactivator SAGA complex. Binding of TFIID to a promoter (with or without TATA element) is the initial step in pre-initiation complex (PIC) formation. TFIID plays a key role in the regulation of gene expression by RNA polymerase II through different activities such as transcription activator interaction, core promoter recognition and selectivity, TFIIA and TFIIB interaction, chromatin modification (histone acetylation by TAF1), facilitation of DNA opening and initiation of transcription. SAGA acts as a general cofactor required for essentially all RNA polymerase II transcription. At the promoters, SAGA is required for transcription pre-initiation complex (PIC) recruitment. It influences RNA polymerase II transcriptional activity through different activities such as TBP interaction (via core/TAF module) and promoter selectivity, interaction with transcription activators (via Tra1/SPT module), and chromatin modification through histone acetylation (via HAT module) and deubiquitination (via DUB module). SAGA preferentially acetylates histones H3 (to form H3K9ac, H3K14ac, H3K18ac and H3K23ac) and H2B and deubiquitinates histone H2B. SAGA interacts with DNA via upstream activating sequences (UASs). This is SAGA complex/transcription factor TFIID complex subunit Taf6 from Schizosaccharomyces pombe (strain 972 / ATCC 24843) (Fission yeast).